The following is a 340-amino-acid chain: Phenylalanine--tRNA ligase alpha subunit (340 aa).

Glutamate 251 serves as a coordination point for Mg(2+).

This sequence belongs to the class-II aminoacyl-tRNA synthetase family. Phe-tRNA synthetase alpha subunit type 1 subfamily. Tetramer of two alpha and two beta subunits. Requires Mg(2+) as cofactor.

The protein resides in the cytoplasm. It carries out the reaction tRNA(Phe) + L-phenylalanine + ATP = L-phenylalanyl-tRNA(Phe) + AMP + diphosphate + H(+). This is Phenylalanine--tRNA ligase alpha subunit from Porphyromonas gingivalis (strain ATCC 33277 / DSM 20709 / CIP 103683 / JCM 12257 / NCTC 11834 / 2561).